Consider the following 123-residue polypeptide: Glucose starvation-inducible protein B (123 aa).

Basic and acidic residues-rich tracts occupy residues 1 to 29 and 41 to 109; these read MADNNKMSREEAGRKGGETTSKNHDKEFY and SKNH…KEFY. Residues 1 to 123 form a disordered region; that stretch reads MADNNKMSRE…SKGGNARNND (123 aa). 5 tandem repeats follow at residues 13–32, 33–52, 53–72, 73–92, and 93–112. Residues 13-120 form a 5 X 20 AA approximate tandem repeats region; that stretch reads GRKGGETTSK…EIGSKGGNAR (108 aa).

In terms of biological role, involved in an adaptive response to nutrient deprivation other than sporulation. The polypeptide is Glucose starvation-inducible protein B (gsiB) (Bacillus subtilis (strain 168)).